Here is a 265-residue protein sequence, read N- to C-terminus: Mlc titration factor A (265 aa).

Zn(2+) is bound by residues histidine 111, histidine 148, histidine 152, and glutamate 211.

This sequence belongs to the MtfA family. In terms of assembly, interacts with Mlc. It depends on Zn(2+) as a cofactor.

Its subcellular location is the cytoplasm. Involved in the modulation of the activity of the glucose-phosphotransferase system (glucose-PTS). Interacts with the transcriptional repressor Mlc, preventing its interaction with DNA and leading to the modulation of expression of genes regulated by Mlc, including ptsG, which encodes the PTS system glucose-specific EIICB component. Its function is as follows. Shows zinc-dependent metallopeptidase activity. The sequence is that of Mlc titration factor A from Escherichia coli O7:K1 (strain IAI39 / ExPEC).